The following is a 318-amino-acid chain: MAVVAVAGGTGGKGVPGAANEPRRYAVDYDNVEEMRNVLKENNVEVVVSALLLSDESVAKSQINLIRAAAESGTVTKFIPSEYYIDFHSPIPGSDLFTNFQIEAEEELMRHPQLTWTLIRVGIFLDHLTMPFNPKPTYITPYWVFVDIEHEECVFPGDGSQPLVLSHSTDLAAYIECLVGLPSNEWPRESLVASNKIQVKDLQDLIKKTTGTLCGHLGICIRTFLILAIGREFKVTYDSVESIQKGQITPLTSNRPVFDDPQKGKLFQEVEVQVMLSMLSNAHDLPGKNLAELFPEVHVTNIEDFLRAGWEMKQGLKP.

Belongs to the NmrA-type oxidoreductase family. Isoflavone reductase subfamily.

Its pathway is mycotoxin biosynthesis. Aminotransferase; part of the gene cluster that mediates the biosynthesis of swainsonine (SW), a cytotoxic fungal alkaloid and a potential cancer therapy drug. Swainsonine production occurs via a multibranched pathway and is dispensable for fungal colonization of plants and infection of insect hosts. The first step of swainsonine biosynthesis is the production of the precursor pipecolic acid (PA) via conversion of L-lysine (Lys) to 1-piperideine-6-carboxylate (P6C) by the aminotransferase swnA, the latter being further reduced to PA by the reductase swnR. The PKS-NRPS hybrid synthetase swnK uptakes and condensates PA and malonyl-CoA with and without skipping of the ketoreductase (KR) domain in order to produce 3 intermediates, 1-oxoindolizidine, (1S)-1-hydroxyindolizin, and (1R)-1-hydroxyindolizine; with the transisomer (1S)-1-hydroxyindolizin being predominant. The terminal thioester reductase (TE) domain of swnK is involved in reduction of the thioester bond to release the intermediate aldehydes. The oxidoreductase swnN could contribute to the reduction of 1-oxoindolizidine to (1S)-1-hydroxyindolizin and (1R)-1-hydroxyindolizine, contributing to the major route of SW production. The dioxygenase swnH2 would be responsible for the oxidization of (1R)-1-hydroxyindolizine into (1R,2S)-1,2-dihydroxyindolizine and of (1S)-1-hydroxyindolizin to yield both (1R,2S)-1,2-dihydroxyindolizine and (1S,2S)-1,2-dihydroxyindolizine. The dioxygenase swnH1 then performs the conversion of the 1,2-dihydroxyindolizine epimers to SW. The polypeptide is Oxidoreductase swnN (Arthroderma benhamiae (strain ATCC MYA-4681 / CBS 112371) (Trichophyton mentagrophytes)).